We begin with the raw amino-acid sequence, 221 residues long: Protein GrpE (221 aa).

The disordered stretch occupies residues 1–43; the sequence is MFTNPFGRKKDMSDDQKKNNQPDTEADNAENIKFAADDTELRA. The span at 8–20 shows a compositional bias: basic and acidic residues; sequence RKKDMSDDQKKNN.

Belongs to the GrpE family. In terms of assembly, homodimer.

Its subcellular location is the cytoplasm. Its function is as follows. Participates actively in the response to hyperosmotic and heat shock by preventing the aggregation of stress-denatured proteins, in association with DnaK and GrpE. It is the nucleotide exchange factor for DnaK and may function as a thermosensor. Unfolded proteins bind initially to DnaJ; upon interaction with the DnaJ-bound protein, DnaK hydrolyzes its bound ATP, resulting in the formation of a stable complex. GrpE releases ADP from DnaK; ATP binding to DnaK triggers the release of the substrate protein, thus completing the reaction cycle. Several rounds of ATP-dependent interactions between DnaJ, DnaK and GrpE are required for fully efficient folding. This Deinococcus radiodurans (strain ATCC 13939 / DSM 20539 / JCM 16871 / CCUG 27074 / LMG 4051 / NBRC 15346 / NCIMB 9279 / VKM B-1422 / R1) protein is Protein GrpE.